A 157-amino-acid chain; its full sequence is Transcription antitermination protein NusB (157 aa).

The protein belongs to the NusB family.

In terms of biological role, involved in transcription antitermination. Required for transcription of ribosomal RNA (rRNA) genes. Binds specifically to the boxA antiterminator sequence of the ribosomal RNA (rrn) operons. The protein is Transcription antitermination protein NusB of Helicobacter hepaticus (strain ATCC 51449 / 3B1).